The sequence spans 999 residues: MKCLKTLLVSTTLLGAFSLNAEVTLEQQIKITDEGLHFDGRNLDFSNVGSPDTGEKYDYFFGPNISAHGDAVKTYKHYVFMTWYKGGKNERNVMLSRYNTLSGELSTIEFPHRHTGFRGDPLVGESHNTIGLAVSPINGTIHMVFDMHAYDDNNHGGKFKDDFFRYSYSVPGAAELPHSEFTLDKFVKDTSEVSQGDDDYKHLTMTGDLGDKGNFARLTYPKFFTTVDGTLLLYMRLGGNNNGAYVFNRYDAEAEKWSTFTPFNENNQKSKGNPYNWGLYGNMKYINGKLRVGFQQRSSDNTDKYKYQNGVFYAYSDHPDGFGDWKNHKGEPMTWPLINSDEIKVFEPGDYISHTEANSVYIVGSFDWTVTEKGDIHIISKVRSTDRNRPDYEEVYIHSYKPAGADEFIISTDFTGASEIYTSGDNVYIVGLEGGRPYVEKAQGGTNNFVRVYKATDGPVFDHGTLYIKDGKVYYYLMERTSGNAMPLYLQIIDLDLESDANAPLVSFPSPSLTVEQGFEKLSLNISAESPVEGRFIQSVSLYINDELVRTDDSMPYLFGHGSKPHETGAMGWLDTHEPNPSPLPAGTHIFKAVAVDSEGDSAIATMVLNVNSNAPIVSFPQESLEVDEGFEKLSLNISAESAVEGRSIESVSLYINGELVRTDTSLPYLFGHASKPHETGAMGWLDTHSTNPSPLTAGTYEFTAVAIDSEGEESTASMQLVVKGEPQPPAVTWPNSTVTVYEGYEKLAITIDAESPVEGRDIQSVTLYRNGELVRVDTRPVWNFGHSFAPYEFGAMGWLDRHEPNPSPLGVGTHTFTAVAKDSTGLEGESDMTLIVLSLPGPSITINESDVSLLTEYQNLAITADASTANDDITIVSLALYLNEQLVREIYEPPFEWGGENYSDELLDLPVGTHLAKVVATDSNNNQTEASMFVTIELLGDLNKDSVVDNKDIRLFTAALRNGEEMNIRYDFNDDGVVNNRDTRGLVHRCTYSRCGSN.

Positions 1–21 (MKCLKTLLVSTTLLGAFSLNA) are cleaved as a signal peptide. Substrate is bound at residue 126–127 (SH). The Proton donor/acceptor role is filled by His-127. Positions 189, 199, and 201 each coordinate Ca(2+). Substrate is bound by residues Tyr-280 and Arg-297. Ca(2+) contacts are provided by Asp-300, Asp-303, and Tyr-305. Tyr-361 serves as a coordination point for substrate.

Belongs to the polysaccharide lyase 24 family.

Ulvan lyase involved in ulvan degradation. Ulvan is the main polysaccharide component of the Ulvales (green seaweed) cell wall. It is composed of disaccharide building blocks comprising 3-sulfated rhamnose (Rha3S) linked to D-glucuronic acid (GlcA), L-iduronic acid (IduA), or D-xylose (Xyl). Ulvan lyase catalyzes preferentially the endolytic cleavage of the glycosidic bond between Rha3S and the uronic acid GlcA, but not IduA, producing oligosaccharides that have unsaturated 4-deoxy-L-threo-hex-4-enopyranosiduronic acid (deltaUA) at the non-reducing end. The most abundant end products in the degradation of the ulvan polysaccharide were deltaUA-Rha3S disaccharides and deltaUA-Rha3S-IduA-Rha3S and deltaUA-Rha3S-Xyl-Rha3S tetrasaccharides. This is Ulvan lyase, long isoform from Alteromonas sp.